Consider the following 500-residue polypeptide: Lysine--tRNA ligase (500 aa).

The Mg(2+) site is built by E410 and E417.

The protein belongs to the class-II aminoacyl-tRNA synthetase family. In terms of assembly, homodimer. Mg(2+) serves as cofactor.

The protein localises to the cytoplasm. The catalysed reaction is tRNA(Lys) + L-lysine + ATP = L-lysyl-tRNA(Lys) + AMP + diphosphate. The chain is Lysine--tRNA ligase from Shewanella amazonensis (strain ATCC BAA-1098 / SB2B).